The primary structure comprises 139 residues: Large ribosomal subunit protein uL16 (139 aa).

It belongs to the universal ribosomal protein uL16 family. Part of the 50S ribosomal subunit.

In terms of biological role, binds 23S rRNA and is also seen to make contacts with the A and possibly P site tRNAs. The polypeptide is Large ribosomal subunit protein uL16 (Koribacter versatilis (strain Ellin345)).